The sequence spans 205 residues: SREBP regulating gene protein (205 aa).

The Cytoplasmic segment spans residues 1-16; it reads MVPCGAVLWRRLLRKR. The chain crosses the membrane as a helical span at residues 17 to 35; sequence WVLGVVFGLSLVYFLSSTF. Over 36–205 the chain is Lumenal; it reads KQEERTVRDR…GEYPPELLPV (170 aa). Asn67 carries an N-linked (GlcNAc...) asparagine glycan.

Belongs to the SPRING family.

The protein localises to the golgi apparatus membrane. Functionally, positively regulates hepatic SREBP signaling pathway by modulating the proper localization of SCAP (SREBP cleavage-activating protein) to the endoplasmic reticulum, thereby controlling the level of functional SCAP. In Gallus gallus (Chicken), this protein is SREBP regulating gene protein.